Here is a 289-residue protein sequence, read N- to C-terminus: ATP synthase subunit a (289 aa).

A run of 6 helical transmembrane segments spans residues 43–63, 104–124, 160–180, 193–213, 232–252, and 259–279; these read AFHV…LFIF, IAPL…IDLV, ISVF…GGFL, IVVQ…TLIA, IFIL…ALGV, and AVFH…LTIV.

It belongs to the ATPase A chain family. As to quaternary structure, F-type ATPases have 2 components, CF(1) - the catalytic core - and CF(0) - the membrane proton channel. CF(1) has five subunits: alpha(3), beta(3), gamma(1), delta(1), epsilon(1). CF(0) has three main subunits: a(1), b(2) and c(9-12). The alpha and beta chains form an alternating ring which encloses part of the gamma chain. CF(1) is attached to CF(0) by a central stalk formed by the gamma and epsilon chains, while a peripheral stalk is formed by the delta and b chains.

It is found in the cell inner membrane. In terms of biological role, key component of the proton channel; it plays a direct role in the translocation of protons across the membrane. The chain is ATP synthase subunit a from Pseudomonas paraeruginosa (strain DSM 24068 / PA7) (Pseudomonas aeruginosa (strain PA7)).